The sequence spans 627 residues: DNA topoisomerase 4 subunit B (627 aa).

Residues Tyr4, Asn41, Asp68, 109-115 (GLHGVGV), and Lys333 contribute to the ATP site. Positions 412-525 (TELFIVEGDS…NGHIYIAQPP (114 aa)) constitute a Toprim domain. Glu418, Asp490, and Asp492 together coordinate Mg(2+).

The protein belongs to the type II topoisomerase family. ParE type 1 subfamily. In terms of assembly, heterotetramer composed of ParC and ParE. Requires Mg(2+) as cofactor. The cofactor is Mn(2+). Ca(2+) serves as cofactor.

The enzyme catalyses ATP-dependent breakage, passage and rejoining of double-stranded DNA.. Its activity is regulated as follows. Pyrrolopyrimidines inhibit both GyrB and its paralog in topoisomerase IV (parE). Functionally, topoisomerase IV is essential for chromosome segregation. It relaxes supercoiled DNA. Performs the decatenation events required during the replication of a circular DNA molecule. The polypeptide is DNA topoisomerase 4 subunit B (Francisella tularensis subsp. holarctica (strain LVS)).